Consider the following 236-residue polypeptide: Leucyl/phenylalanyl-tRNA--protein transferase (236 aa).

The protein belongs to the L/F-transferase family.

Its subcellular location is the cytoplasm. It carries out the reaction N-terminal L-lysyl-[protein] + L-leucyl-tRNA(Leu) = N-terminal L-leucyl-L-lysyl-[protein] + tRNA(Leu) + H(+). It catalyses the reaction N-terminal L-arginyl-[protein] + L-leucyl-tRNA(Leu) = N-terminal L-leucyl-L-arginyl-[protein] + tRNA(Leu) + H(+). The enzyme catalyses L-phenylalanyl-tRNA(Phe) + an N-terminal L-alpha-aminoacyl-[protein] = an N-terminal L-phenylalanyl-L-alpha-aminoacyl-[protein] + tRNA(Phe). Functions in the N-end rule pathway of protein degradation where it conjugates Leu, Phe and, less efficiently, Met from aminoacyl-tRNAs to the N-termini of proteins containing an N-terminal arginine or lysine. In Shewanella sediminis (strain HAW-EB3), this protein is Leucyl/phenylalanyl-tRNA--protein transferase.